The primary structure comprises 224 residues: Pyridoxine/pyridoxamine 5'-phosphate oxidase (224 aa).

Residues Arg19–Tyr22 and Lys81 each bind substrate. Residues Arg76 to Lys81, Phe91 to Thr92, Lys98, and Gln120 contribute to the FMN site. Substrate is bound by residues Tyr138 and Arg142. Residues Gln155–Ser156 and Trp201 contribute to the FMN site. Residue Arg207–His209 coordinates substrate. Arg211 is a binding site for FMN.

The protein belongs to the pyridoxamine 5'-phosphate oxidase family. Homodimer. FMN is required as a cofactor.

The enzyme catalyses pyridoxamine 5'-phosphate + O2 + H2O = pyridoxal 5'-phosphate + H2O2 + NH4(+). The catalysed reaction is pyridoxine 5'-phosphate + O2 = pyridoxal 5'-phosphate + H2O2. It participates in cofactor metabolism; pyridoxal 5'-phosphate salvage; pyridoxal 5'-phosphate from pyridoxamine 5'-phosphate: step 1/1. The protein operates within cofactor metabolism; pyridoxal 5'-phosphate salvage; pyridoxal 5'-phosphate from pyridoxine 5'-phosphate: step 1/1. Functionally, catalyzes the oxidation of either pyridoxine 5'-phosphate (PNP) or pyridoxamine 5'-phosphate (PMP) into pyridoxal 5'-phosphate (PLP). This is Pyridoxine/pyridoxamine 5'-phosphate oxidase from Mycobacterium bovis (strain ATCC BAA-935 / AF2122/97).